A 475-amino-acid chain; its full sequence is Ribulose bisphosphate carboxylase large chain (475 aa).

Positions methionine 1–serine 2 are excised as a propeptide. An N-acetylproline modification is found at proline 3. Lysine 14 carries the N6,N6,N6-trimethyllysine modification. 2 residues coordinate substrate: asparagine 123 and threonine 173. The active-site Proton acceptor is the lysine 175. Substrate is bound at residue lysine 177. Mg(2+) is bound by residues lysine 201, aspartate 203, and glutamate 204. Lysine 201 bears the N6-carboxylysine mark. The active-site Proton acceptor is histidine 294. Substrate contacts are provided by arginine 295, histidine 327, and serine 379.

This sequence belongs to the RuBisCO large chain family. Type I subfamily. As to quaternary structure, heterohexadecamer of 8 large chains and 8 small chains; disulfide-linked. The disulfide link is formed within the large subunit homodimers. Mg(2+) is required as a cofactor. In terms of processing, the disulfide bond which can form in the large chain dimeric partners within the hexadecamer appears to be associated with oxidative stress and protein turnover.

Its subcellular location is the plastid. It is found in the chloroplast. It carries out the reaction 2 (2R)-3-phosphoglycerate + 2 H(+) = D-ribulose 1,5-bisphosphate + CO2 + H2O. The enzyme catalyses D-ribulose 1,5-bisphosphate + O2 = 2-phosphoglycolate + (2R)-3-phosphoglycerate + 2 H(+). Functionally, ruBisCO catalyzes two reactions: the carboxylation of D-ribulose 1,5-bisphosphate, the primary event in carbon dioxide fixation, as well as the oxidative fragmentation of the pentose substrate in the photorespiration process. Both reactions occur simultaneously and in competition at the same active site. This Bouvardia ternifolia (Firecrackerbush) protein is Ribulose bisphosphate carboxylase large chain.